The chain runs to 655 residues: p-hydroxybenzoic acid efflux pump subunit AaeB (655 aa).

A run of 11 helical transmembrane segments spans residues 13 to 33, 38 to 58, 69 to 89, 93 to 113, 121 to 141, 152 to 172, 370 to 390, 407 to 427, 431 to 451, 459 to 479, and 482 to 502; these read FAVKLATAIVLALFVGFHFQL, WAVLTAAIVAAGPAFAAGGEP, LRIIGTFIGCIAGLVIIIAMI, LLMILVCCIWAGFCTWISSLV, WGLAGYTALIIVITIQPEPLL, EIVIGIVCAIMADLLFSPRSI, LFWLWTGWTSGSGAMVMIAVV, FIYGTLAALPLGLLYFLVIIP, QSMLLLCISLAVLGFFLGIEV, MGALASTINIIVLDNPMTFHF, and FLDSALGQIVGCVLAFTVILL.

The protein belongs to the aromatic acid exporter ArAE (TC 2.A.85) family.

It is found in the cell inner membrane. Forms an efflux pump with AaeA. Could function as a metabolic relief valve, allowing to eliminate certain compounds when they accumulate to high levels in the cell. The polypeptide is p-hydroxybenzoic acid efflux pump subunit AaeB (Shigella sonnei (strain Ss046)).